The primary structure comprises 149 residues: MERTFLAIKPDGVQRGLVGEIIRRFETKGFTLVGLKFLQVSKELAEQHYGVHRERPFFPSLVEFITSGPVVAMVWEGDGVIASARKIIGATNPLTAEPGTIRGDFGINIGRNLIHGSDAPETAQKEVSLWFTDAELVNWQPHLTPWLHE.

Residues K9, F57, R85, T91, R102, and N112 each contribute to the ATP site. Residue H115 is the Pros-phosphohistidine intermediate of the active site.

It belongs to the NDK family. As to quaternary structure, homotetramer. Mg(2+) serves as cofactor.

The protein localises to the cytoplasm. The enzyme catalyses a 2'-deoxyribonucleoside 5'-diphosphate + ATP = a 2'-deoxyribonucleoside 5'-triphosphate + ADP. It carries out the reaction a ribonucleoside 5'-diphosphate + ATP = a ribonucleoside 5'-triphosphate + ADP. Major role in the synthesis of nucleoside triphosphates other than ATP. The ATP gamma phosphate is transferred to the NDP beta phosphate via a ping-pong mechanism, using a phosphorylated active-site intermediate. The sequence is that of Nucleoside diphosphate kinase from Nostoc sp. (strain PCC 7120 / SAG 25.82 / UTEX 2576).